Consider the following 1077-residue polypeptide: Error-prone DNA polymerase (1077 aa).

This sequence belongs to the DNA polymerase type-C family. DnaE2 subfamily.

It is found in the cytoplasm. It catalyses the reaction DNA(n) + a 2'-deoxyribonucleoside 5'-triphosphate = DNA(n+1) + diphosphate. Its function is as follows. DNA polymerase involved in damage-induced mutagenesis and translesion synthesis (TLS). It is not the major replicative DNA polymerase. The polypeptide is Error-prone DNA polymerase (Brucella abortus biovar 1 (strain 9-941)).